The primary structure comprises 712 residues: T-box transcription factor TBX2 (712 aa).

The segment at residues 109–287 (LEAKELWDQF…NNPFAKGFRD (179 aa)) is a DNA-binding region (T-box). The segment at 313–450 (PERDGAESDA…EGKEQGLAPL (138 aa)) is disordered. The span at 326–336 (DPPPAREPPTS) shows a compositional bias: pro residues. Serine 336, serine 342, and serine 360 each carry phosphoserine. Basic and acidic residues-rich tracts occupy residues 363 to 372 (EPERLSEERA), 391 to 409 (TEPE…KEPA), and 421 to 444 (SLEK…EGKE). Residues 518–601 (GGNGGGGGPG…ATSAAAAAAA (84 aa)) form a repression domain 1 (RD1) region. 4 positions are modified to phosphoserine: serine 622, serine 653, serine 657, and serine 676. The interval 637 to 687 (LTTGLASEGSKAAGGNSREPSPLPELALRKVGAPSRGALSPSGSAKEAANE) is disordered.

As to quaternary structure, binds DNA as a monomer. Interacts with PML (isoform PML-2, isoform PML-3 and isoform PML-4). As to expression, expressed primarily in adult in kidney, lung, and placenta. Weak expression in heart and ovary.

It is found in the nucleus. Its function is as follows. Transcription factor which acts as a transcriptional repressor. May also function as a transcriptional activator. Binds to the palindromic T site 5'-TTCACACCTAGGTGTGAA-3' DNA sequence, or a half-site, which are present in the regulatory region of several genes. Required for cardiac atrioventricular canal formation. May cooperate with NKX2.5 to negatively modulate expression of NPPA/ANF in the atrioventricular canal. May play a role as a positive regulator of TGFB2 expression, perhaps acting in concert with GATA4 in the developing outflow tract myocardium. Plays a role in limb pattern formation. Acts as a transcriptional repressor of ADAM10 gene expression, perhaps in concert with histone deacetylase HDAC1 as cofactor. Involved in branching morphogenesis in both developing lungs and adult mammary glands, via negative modulation of target genes; acting redundantly with TBX3. Required, together with TBX3, to maintain cell proliferation in the embryonic lung mesenchyme; perhaps acting downstream of SHH, BMP and TGFbeta signaling. Involved in modulating early inner ear development, acting independently of, and also redundantly with TBX3, in different subregions of the developing ear. Acts as a negative regulator of PML function in cellular senescence. Acts as a negative regulator of expression of CDKN1A/p21, IL33 and CCN4; repression of CDKN1A is enhanced in response to UV-induced stress, perhaps as a result of phosphorylation by p38 MAPK. Negatively modulates expression of CDKN2A/p14ARF and CDH1/E-cadherin. Plays a role in induction of the epithelial-mesenchymal transition (EMT). Plays a role in melanocyte proliferation, perhaps via regulation of cyclin CCND1. Involved in melanogenesis, acting via negative modulation of expression of DHICA oxidase/TYRP1 and P protein/OCA2. Involved in regulating retinal pigment epithelium (RPE) cell proliferation, perhaps via negatively modulating transcription of the transcription factor CEBPD. The sequence is that of T-box transcription factor TBX2 (TBX2) from Homo sapiens (Human).